The following is a 381-amino-acid chain: Succinyl-diaminopimelate desuccinylase (381 aa).

His69 provides a ligand contact to Zn(2+). Asp71 is an active-site residue. Zn(2+) is bound at residue Asp103. Glu137 functions as the Proton acceptor in the catalytic mechanism. Positions 138, 166, and 355 each coordinate Zn(2+).

It belongs to the peptidase M20A family. DapE subfamily. In terms of assembly, homodimer. Requires Zn(2+) as cofactor. It depends on Co(2+) as a cofactor.

It carries out the reaction N-succinyl-(2S,6S)-2,6-diaminopimelate + H2O = (2S,6S)-2,6-diaminopimelate + succinate. It functions in the pathway amino-acid biosynthesis; L-lysine biosynthesis via DAP pathway; LL-2,6-diaminopimelate from (S)-tetrahydrodipicolinate (succinylase route): step 3/3. Catalyzes the hydrolysis of N-succinyl-L,L-diaminopimelic acid (SDAP), forming succinate and LL-2,6-diaminopimelate (DAP), an intermediate involved in the bacterial biosynthesis of lysine and meso-diaminopimelic acid, an essential component of bacterial cell walls. This Rickettsia akari (strain Hartford) protein is Succinyl-diaminopimelate desuccinylase.